The chain runs to 443 residues: Spermidine hydroxycinnamoyltransferase 1 (443 aa).

Catalysis depends on proton acceptor residues H167 and D390.

Belongs to the plant acyltransferase family.

In terms of biological role, hydroxycinnamoyl transferase that catalyzes the transfer of an acyl from p-coumaryol-CoA to spermidine, to produce coumaroyl spermidine. Can use feruloyl-CoA as acyl donor. Contributes to the natural variation of spermidine-based phenolamides in rice cultivars. The polypeptide is Spermidine hydroxycinnamoyltransferase 1 (Oryza sativa subsp. japonica (Rice)).